The primary structure comprises 545 residues: CTP synthase (545 aa).

Residues 1-266 (MATNYIFVTG…DTFVCDRFRL (266 aa)) form an amidoligase domain region. S14 is a binding site for CTP. S14 contacts UTP. Residues 15-20 (SLGKGI) and D72 each bind ATP. Residues D72 and E140 each contribute to the Mg(2+) site. Residues 147 to 149 (DIE), 187 to 192 (KTKPTQ), and K223 each bind CTP. UTP is bound by residues 187–192 (KTKPTQ) and K223. 239 to 241 (KDV) lines the ATP pocket. Positions 291–542 (TIGMVGKYVE…VKAAKDYQDS (252 aa)) constitute a Glutamine amidotransferase type-1 domain. An L-glutamine-binding site is contributed by G352. C379 (nucleophile; for glutamine hydrolysis) is an active-site residue. L-glutamine is bound by residues 380–383 (LGMQ), E403, and R470. Active-site residues include H515 and E517.

This sequence belongs to the CTP synthase family. As to quaternary structure, homotetramer.

The catalysed reaction is UTP + L-glutamine + ATP + H2O = CTP + L-glutamate + ADP + phosphate + 2 H(+). The enzyme catalyses L-glutamine + H2O = L-glutamate + NH4(+). It carries out the reaction UTP + NH4(+) + ATP = CTP + ADP + phosphate + 2 H(+). The protein operates within pyrimidine metabolism; CTP biosynthesis via de novo pathway; CTP from UDP: step 2/2. With respect to regulation, allosterically activated by GTP, when glutamine is the substrate; GTP has no effect on the reaction when ammonia is the substrate. The allosteric effector GTP functions by stabilizing the protein conformation that binds the tetrahedral intermediate(s) formed during glutamine hydrolysis. Inhibited by the product CTP, via allosteric rather than competitive inhibition. Functionally, catalyzes the ATP-dependent amination of UTP to CTP with either L-glutamine or ammonia as the source of nitrogen. Regulates intracellular CTP levels through interactions with the four ribonucleotide triphosphates. The polypeptide is CTP synthase (Actinobacillus pleuropneumoniae serotype 7 (strain AP76)).